Consider the following 71-residue polypeptide: Protein PSY3 (71 aa).

The first 25 residues, methionine 1 to alanine 25, serve as a signal peptide directing secretion. Residues arginine 26–asparagine 49 constitute a propeptide that is removed on maturation. A disordered region spans residues serine 47–arginine 71. The residue at position 51 (tyrosine 51) is a Sulfotyrosine. Proline 63 is modified (4-hydroxyproline). Proline 63 carries O-linked (Ara...) hydroxyproline glycosylation. The propeptide occupies glycine 66–arginine 71.

The protein belongs to the sulfated-peptide plant hormone family. Post-translationally, the sulfation and the glycosylation are required for full activity.

It is found in the secreted. Its function is as follows. Promotes cellular proliferation and expansion. This is Protein PSY3 (PSY3) from Arabidopsis thaliana (Mouse-ear cress).